The sequence spans 291 residues: Ajmaline N-methyltransferase (291 aa).

Residues 71-80 (MLDVGCGIGG) form an SAM motif I region. The short motif at 133 to 139 (DGAFDLV) is the Vacuolar targeting signal element. Positions 134 to 142 (GAFDLVLSI) are SAM motif II. Positions 161–170 (VAASGATIII) are SAM motif III.

This sequence belongs to the class I-like SAM-binding methyltransferase superfamily. gTMT family. Homodimer. As to expression, mainly expressed in roots, but barely detectable in stems and flowers.

The protein localises to the vacuole membrane. The catalysed reaction is ajmaline + S-adenosyl-L-methionine = 4-methylajmaline + S-adenosyl-L-homocysteine + H(+). It carries out the reaction norajmaline + S-adenosyl-L-methionine = 4-methylnorajmaline + S-adenosyl-L-homocysteine + H(+). It functions in the pathway alkaloid biosynthesis; ajmaline biosynthesis. Its function is as follows. N-methyltransferase involved in the biosynthesis of ajmaline-type monoterpenoid indole alkaloids (MIAs) natural products, important plant-derived pharmaceuticals used in the therapy of heart disorders. Catalyzes the indole N-methylation of ajmaline to produce 4-methylajmaline. Also able, with a lower efficiency, to mediates the conversion of norajmaline to 4-methylnorajmaline. The chain is Ajmaline N-methyltransferase from Rauvolfia serpentina (Serpentine wood).